Consider the following 779-residue polypeptide: MRRSGTSLSRDLERKIHERLVSLKDTIQQTEIEEWPVSTRRAIQFVQERDMSLRRIKKPILEKVVEKVLDTLKAEVEEKLASSQDLVLVDSDMEEQSDSNLMEVKDTNVINKSITSLWSSPNLKEIDGEDEKKSVGQESITGSAKRKDRRSKTNGSKRQKAEANREPPSDISLSDIGGLDDCINELLELVAMPIKHPEVYQYTGIHPPRGVLLHGPPGCGKTMLANALANELGVPFISISAPSIVSGMSGESEKKVREVFEEAKSLAPCLMFIDEIDAVTPKRESAQREMERRIVAQFLTCMDELSFEKTDGKPVLVIGATNRPDSLDSALRRAGRFDREICLTVPSQDAREKILRTMAKGLKLSGDFDFRQLAKQTPGYVGADLKALTAAAGIIAIKRIFNEISPLNKLDLNSDPRFNELDSDMALDSNDSLPLDHSSIIQRYLNAHPDPLSPEELEPLAICPQDFIEALAKVQPSSKREGFATVPGVSWNNIGALKSIRVELQMAIVQPIKRPELYQSVGISAPTGVLLWGPPGCGKTLLAKAVANESKANFISIRGPELLNKYVGESERAVRQVFLRARASSPCVIFFDELDAMVPRRDDSLSEASSRVVNTLLTELDGLSDRSGVYVIAATNRPDIIDPAMLRPGRLDKTLLVDLPDAHERVEILKTLTKQTPLHEEVNLDVLGRDERCSNFSGADLAALVREAAVTALRSAVFADIASNEPEITQHSALEPIRVTNADFELAFKNIKPSVSDRDRQKYQRLAKRWSSASTNDAD.

Phosphoserine occurs at positions 97 and 120. Over residues 125 to 135 (EIDGEDEKKSV) the composition is skewed to basic and acidic residues. A disordered region spans residues 125 to 174 (EIDGEDEKKSVGQESITGSAKRKDRRSKTNGSKRQKAEANREPPSDISLS). Basic residues predominate over residues 144–158 (AKRKDRRSKTNGSKR). The span at 159–168 (QKAEANREPP) shows a compositional bias: basic and acidic residues. Residues 215-222 (GPPGCGKT) and 533-540 (GPPGCGKT) each bind ATP. Residues 759-779 (DRQKYQRLAKRWSSASTNDAD) are disordered.

It belongs to the AAA ATPase family.

It localises to the nucleus. This is an uncharacterized protein from Schizosaccharomyces pombe (strain 972 / ATCC 24843) (Fission yeast).